Consider the following 224-residue polypeptide: UPF0441 protein ECA0329 (224 aa).

Positions 180–224 (TALAPKPATTSTITRGGFGETVAKQNSMQRSSASSNSSSSRSMGG) are disordered. The segment covering 204–224 (QNSMQRSSASSNSSSSRSMGG) has biased composition (low complexity).

It belongs to the UPF0441 family.

The polypeptide is UPF0441 protein ECA0329 (Pectobacterium atrosepticum (strain SCRI 1043 / ATCC BAA-672) (Erwinia carotovora subsp. atroseptica)).